The chain runs to 297 residues: HTH-type transcriptional regulator ArgP (297 aa).

In terms of domain architecture, HTH lysR-type spans 4–60 (PDYRTLQALDAVIRERGFERAAQKLCITQSAVSQRIKQLENTFGQPLLVRTVPPRPT). The segment at residues 21 to 40 (FERAAQKLCITQSAVSQRIK) is a DNA-binding region (H-T-H motif).

It belongs to the LysR transcriptional regulatory family. As to quaternary structure, homodimer.

In terms of biological role, controls the transcription of genes involved in arginine and lysine metabolism. The polypeptide is HTH-type transcriptional regulator ArgP (Cronobacter sakazakii (strain ATCC BAA-894) (Enterobacter sakazakii)).